The chain runs to 317 residues: Peroxidase 64 (317 aa).

Residues 1–22 (MNAHMLNLLVIVIFVVSFDVQA) form the signal peptide. Cystine bridges form between cysteine 32/cysteine 111, cysteine 65/cysteine 70, cysteine 117/cysteine 313, and cysteine 195/cysteine 227. Histidine 63 serves as the catalytic Proton acceptor. Residues aspartate 64, valine 67, glycine 69, aspartate 71, and serine 73 each contribute to the Ca(2+) site. Substrate is bound at residue proline 158. Residue asparagine 163 is glycosylated (N-linked (GlcNAc...) asparagine). Position 188 (histidine 188) interacts with heme b. Threonine 189 contacts Ca(2+). Aspartate 241, threonine 243, and aspartate 248 together coordinate Ca(2+).

Belongs to the peroxidase family. Classical plant (class III) peroxidase subfamily. It depends on heme b as a cofactor. Requires Ca(2+) as cofactor. As to expression, expressed in the whole plant, but preferentially in roots.

The protein localises to the secreted. The enzyme catalyses 2 a phenolic donor + H2O2 = 2 a phenolic radical donor + 2 H2O. Its function is as follows. Removal of H(2)O(2), oxidation of toxic reductants, biosynthesis and degradation of lignin, suberization, auxin catabolism, response to environmental stresses such as wounding, pathogen attack and oxidative stress. These functions might be dependent on each isozyme/isoform in each plant tissue. The chain is Peroxidase 64 (PER64) from Arabidopsis thaliana (Mouse-ear cress).